The primary structure comprises 244 residues: 3-oxoacyl-[acyl-carrier-protein] reductase FabG (244 aa).

NADP(+) contacts are provided by residues 12-15 (GASR) and Thr37. Positions 50 and 53 each coordinate Ca(2+). NADP(+)-binding positions include 59 to 60 (NV) and Asn86. Position 138 (Ser138) interacts with substrate. Asn145 is a binding site for Ca(2+). Tyr151 acts as the Proton acceptor in catalysis. NADP(+) is bound by residues 151–155 (YAAAK) and Ile184. Residues Glu233 and Thr234 each coordinate Ca(2+).

The protein belongs to the short-chain dehydrogenases/reductases (SDR) family. As to quaternary structure, homotetramer.

It catalyses the reaction a (3R)-hydroxyacyl-[ACP] + NADP(+) = a 3-oxoacyl-[ACP] + NADPH + H(+). The protein operates within lipid metabolism; fatty acid biosynthesis. Catalyzes the NADPH-dependent reduction of beta-ketoacyl-ACP substrates to beta-hydroxyacyl-ACP products, the first reductive step in the elongation cycle of fatty acid biosynthesis. The polypeptide is 3-oxoacyl-[acyl-carrier-protein] reductase FabG (fabG) (Salmonella typhi).